The chain runs to 336 residues: S-adenosylmethionine:tRNA ribosyltransferase-isomerase (336 aa).

It belongs to the QueA family. Monomer.

The protein localises to the cytoplasm. The catalysed reaction is 7-aminomethyl-7-carbaguanosine(34) in tRNA + S-adenosyl-L-methionine = epoxyqueuosine(34) in tRNA + adenine + L-methionine + 2 H(+). Its pathway is tRNA modification; tRNA-queuosine biosynthesis. In terms of biological role, transfers and isomerizes the ribose moiety from AdoMet to the 7-aminomethyl group of 7-deazaguanine (preQ1-tRNA) to give epoxyqueuosine (oQ-tRNA). This Sulfurihydrogenibium sp. (strain YO3AOP1) protein is S-adenosylmethionine:tRNA ribosyltransferase-isomerase.